Consider the following 265-residue polypeptide: Indole-3-glycerol phosphate synthase (265 aa).

The protein belongs to the TrpC family.

The catalysed reaction is 1-(2-carboxyphenylamino)-1-deoxy-D-ribulose 5-phosphate + H(+) = (1S,2R)-1-C-(indol-3-yl)glycerol 3-phosphate + CO2 + H2O. It functions in the pathway amino-acid biosynthesis; L-tryptophan biosynthesis; L-tryptophan from chorismate: step 4/5. The polypeptide is Indole-3-glycerol phosphate synthase (Xanthomonas oryzae pv. oryzae (strain MAFF 311018)).